We begin with the raw amino-acid sequence, 291 residues long: Light-independent protochlorophyllide reductase iron-sulfur ATP-binding protein (291 aa).

Residues 10-15 and K39 each bind ATP; that span reads GIGKST. Residue S14 coordinates Mg(2+). The [4Fe-4S] cluster site is built by C95 and C129. 180–181 contacts ATP; it reads NR.

The protein belongs to the NifH/BchL/ChlL family. In terms of assembly, homodimer. Protochlorophyllide reductase is composed of three subunits; ChlL, ChlN and ChlB. Requires [4Fe-4S] cluster as cofactor.

Its subcellular location is the plastid. The protein localises to the chloroplast. It catalyses the reaction chlorophyllide a + oxidized 2[4Fe-4S]-[ferredoxin] + 2 ADP + 2 phosphate = protochlorophyllide a + reduced 2[4Fe-4S]-[ferredoxin] + 2 ATP + 2 H2O. It functions in the pathway porphyrin-containing compound metabolism; chlorophyll biosynthesis (light-independent). Functionally, component of the dark-operative protochlorophyllide reductase (DPOR) that uses Mg-ATP and reduced ferredoxin to reduce ring D of protochlorophyllide (Pchlide) to form chlorophyllide a (Chlide). This reaction is light-independent. The L component serves as a unique electron donor to the NB-component of the complex, and binds Mg-ATP. The polypeptide is Light-independent protochlorophyllide reductase iron-sulfur ATP-binding protein (Pinus thunbergii (Japanese black pine)).